The chain runs to 319 residues: 4-diphosphocytidyl-2-C-methyl-D-erythritol kinase (319 aa).

The active site involves Lys18. 103 to 113 contributes to the ATP binding site; sequence PIGAGLAGGST. Asp145 is an active-site residue.

Belongs to the GHMP kinase family. IspE subfamily.

It carries out the reaction 4-CDP-2-C-methyl-D-erythritol + ATP = 4-CDP-2-C-methyl-D-erythritol 2-phosphate + ADP + H(+). It participates in isoprenoid biosynthesis; isopentenyl diphosphate biosynthesis via DXP pathway; isopentenyl diphosphate from 1-deoxy-D-xylulose 5-phosphate: step 3/6. Its function is as follows. Catalyzes the phosphorylation of the position 2 hydroxy group of 4-diphosphocytidyl-2C-methyl-D-erythritol. The sequence is that of 4-diphosphocytidyl-2-C-methyl-D-erythritol kinase from Prochlorococcus marinus (strain NATL2A).